We begin with the raw amino-acid sequence, 241 residues long: Ribonuclease 3 (241 aa).

In terms of domain architecture, RNase III spans 16–144 (HAEFEKKINY…VIGAIFQDGG (129 aa)). Glu-57 provides a ligand contact to Mg(2+). Catalysis depends on residues Asp-61 and Glu-133. A Mg(2+)-binding site is contributed by Glu-133. The 70-residue stretch at 171–240 (DAKSRLQEIL…AALAIKKIES (70 aa)) folds into the DRBM domain.

The protein belongs to the ribonuclease III family. Homodimer. Mg(2+) serves as cofactor.

It localises to the cytoplasm. The catalysed reaction is Endonucleolytic cleavage to 5'-phosphomonoester.. Functionally, digests double-stranded RNA. Involved in the processing of primary rRNA transcript to yield the immediate precursors to the large and small rRNAs (23S and 16S). Processes some mRNAs, and tRNAs when they are encoded in the rRNA operon. Processes pre-crRNA and tracrRNA of type II CRISPR loci if present in the organism. This is Ribonuclease 3 from Desulfotalea psychrophila (strain LSv54 / DSM 12343).